Reading from the N-terminus, the 172-residue chain is Large ribosomal subunit protein uL10 (172 aa).

This sequence belongs to the universal ribosomal protein uL10 family. In terms of assembly, part of the ribosomal stalk of the 50S ribosomal subunit. The N-terminus interacts with L11 and the large rRNA to form the base of the stalk. The C-terminus forms an elongated spine to which L12 dimers bind in a sequential fashion forming a multimeric L10(L12)X complex.

Its function is as follows. Forms part of the ribosomal stalk, playing a central role in the interaction of the ribosome with GTP-bound translation factors. The chain is Large ribosomal subunit protein uL10 from Rhodopseudomonas palustris (strain BisA53).